Here is a 359-residue protein sequence, read N- to C-terminus: Src kinase-associated phosphoprotein 2 (359 aa).

Phosphoserine is present on residues Ser-5, Ser-6, and Ser-9. Positions 67 to 88 (GDAEDGEEYDDPFAGPPDTISL) are disordered. Tyr-75 carries the phosphotyrosine modification. Phosphoserine is present on residues Ser-87 and Ser-90. The region spanning 116–219 (FVLKAGYLEK…WVQQLKFVLQ (104 aa)) is the PH domain. Tyr-151 and Tyr-197 each carry phosphotyrosine. Phosphoserine is present on Ser-223. Phosphotyrosine is present on Tyr-261. Residue Ser-286 is modified to Phosphoserine. The SH3 domain maps to 297–358 (DYANFYQGLW…PKAYIMEMYD (62 aa)).

The protein belongs to the SKAP family. In terms of assembly, interacts with FYB1, which is required for SKAP2 protein stability. Interacts with PTPNS1. Part of a complex consisting of SKAP2, FYB1 and PTPNS1. Part of a complex consisting of SKAP2, FYB1 and LILRB3. Interacts with LAT, GRB2, PTK2B, and PRAM1. May interact with actin. May interact with FYN, HCK and LYN. Interacts with FASLG.

The protein localises to the cytoplasm. In terms of biological role, may be involved in B-cell and macrophage adhesion processes. In B-cells, may act by coupling the B-cell receptor (BCR) to integrin activation. May play a role in src signaling pathway. In Pongo abelii (Sumatran orangutan), this protein is Src kinase-associated phosphoprotein 2 (SKAP2).